A 180-amino-acid chain; its full sequence is GTP cyclohydrolase 1 (180 aa).

3 residues coordinate Zn(2+): Cys-71, His-74, and Cys-142.

This sequence belongs to the GTP cyclohydrolase I family. Homomer.

The catalysed reaction is GTP + H2O = 7,8-dihydroneopterin 3'-triphosphate + formate + H(+). It functions in the pathway cofactor biosynthesis; 7,8-dihydroneopterin triphosphate biosynthesis; 7,8-dihydroneopterin triphosphate from GTP: step 1/1. The polypeptide is GTP cyclohydrolase 1 (Helicobacter pylori (strain G27)).